A 1497-amino-acid polypeptide reads, in one-letter code: MALRVKTNKKPCWEMTKEELTSGKTEVFNYEELLEFAEGDIGKVFGPEFAPIDKYSRRVRLPAREYLLVTRVTLMDAEPNNYRVGARMVTEYDLPVNGELSEGGDCPWAVLVESGQCDLMLISYMGIDFQCQGDRVYRLLNTTLTFYGVAHEGETLEYDIRVTGFAKRLDGGISMFFFEYDCYVNGRLLIEMRDGCAGFFTNEELAAGKGVVFTRADLAARAKVAKQDISPYAVAPCLHKTTLSEKEMQTLVDKDWASVFGSKNGMPEINYKLCARKMLMIDRVPKIDHTGGIYGLGLIVGEKILERDHWYFPCHFVKDEVMAGSLVSDGCSQMLKMYMIWLGLHLTTGPFDFRPVSGHPNKVRCRGQISPHKGKLVYVMEIKEIGFDEKNDPYAIADVNIIDIDYEKGQTFEMSRLGDYGKGDLNKKIVVDFKGIALKMQKRSTSTEEPSKVVPVFAKGQATVGTEASRAPGAATAYSPDVLAPAPVALPKNLLKGDPLAPREMTWHPMARIPGNPTPSFAPSAYAPRNIAFTPFPGNPLDNDHTPGKMPLTWFNMAEFMAGKVSQCLGPEFTKFDNSNTSRSPAWDLALVTRAVSVTDMEHVKWRNIDCNPSKGTMIGEFDCPADAWFYKGAANDGHMPYSILMEIALQTSGVLTSVLKAPLTMEKDDILFRNLDANADFVRADVDFRGKTIRNITKCTGYSMLGEMGVHRFSFELSVDDVVFYKGTTSFGWFVPEVFAAQAGLDSGRKSEPWFVEQKVPAGQVVSYDVRPGASGRTSLFANAPSGAQLNRRTNQGQYLDKIDLVSGSGKQGLGYGHGVKAVNPNDWFFACHFWFDSVMPGSLGVESMFQLVEAIAVQDDLAGKHGIANPTITHAPGKISWKYRGQLTPKSKQMDSEVHVTSIEAHDGVVDVVADGYLWADGLRVYQVNNIRVRIASGEPAASSSASSVGSSASAEVAERTRSKAAPQPVASGPAQSINLEQLKTDLLELDAPLYLSQDPTTGQLKKHTDVASGQATIVQPCTLGDLGDRSFMETYGVVAPLYTGAMAKGIASADLVIAAGKRKILGSFGAGGLPMHLVREAVDKIQAALPQGPYAVNLIHSPFDSNLEKGNVDLFLEKGVTVVEASAFMTLTPQVVRYRAAGLSRNADGSVRIRNRIIGKVSRTELAEMFIRPAPEHLLEKLIASGEITQEQAELARRVPVADDIAVEADSGGHTDNRPIHVILPLIINLRNRLHRECGYPASLRVRVGAGGGVGCPQAAAAALSMGAAFIVTGTVNQVCKQSGTCDNVRKALSKASYSDICMAPAADMFEEGVKLQVLKKGTMFPSRANKLYELFCKYDSFESMPPNELERVEKRIFQRALAEVWQETKDFYINRLHNPEKIQRAERDPKLKMSLCFRWYLGLASFWANAGIADRVMDYQVWCGPAIGAFNDFIKGTYLDPEVSGEYPCVVQVNLQILRGACYLRRLNALRNDPRIDLETEDAAFVYEPTGSL.

Dehydratase (DH) domain stretches follow at residues 271–422 (YKLC…DYGK) and 797–937 (QGQY…RVRI). Low complexity predominate over residues 944–958 (ASSSASSVGSSASAE). Residues 944–977 (ASSSASSVGSSASAEVAERTRSKAAPQPVASGPA) are disordered. The segment at 1026–1470 (LGDLGDRSFM…ILRGACYLRR (445 aa)) is enoylreductase (ER) domain.

It belongs to the thioester dehydratase family. FabA subfamily. As to quaternary structure, component of the polyunsaturated fatty acid synthase complex composed of at least ORF-A, ORF-B and ORF-C.

Its pathway is lipid metabolism; fatty acid biosynthesis. In terms of biological role, polyketide synthase-like protein; part of the polyunsaturated fatty acid synthase composed of the 3 PKS-like subunits A, B and C. While the saturated fatty acids (SFAs) in Thraustochytrium are produced by the conventional fatty acid synthase (FAS) pathway, polyunsaturated fatty acids (PUFAs) including docosahexeanoic acid (DHA) and docosapentaenoic acid (DPA) are synthesized via an anaerobical PKS pathway. PUFA synthase assimilates fatty acyl-CoA, the product of FAS, as the starter unit to synthesize DPA, and this starter unit may be butyryl-CoA, hexanoyl-CoA, or octanoyl-CoA. DPA and DHA biosynthesis seem to differ by the reduction at the N-3 position by PUFA synthase, not the extension of carbon chain. In DHA biosynthesis, PUFA synthase extends the fatty acyl chain from the methyl toward the carboxyl end, and the double bond is formed when the carbon chain is growing, instead of afterward. Therefore, PUFA synthase is unable to transform DPA to DHA, suggesting that DPA is not the precursor of DHA. Moreover, DPA molecule is partly extended by FAS KS domain, so DPA biosynthesis is less dependent on PUFA synthase KS domain than DHA. The protein is Polyunsaturated fatty acid synthase subunit C of Thraustochytrium sp. (strain ATCC 26185 / S-3).